The sequence spans 128 residues: Aspartate 1-decarboxylase (128 aa).

The Schiff-base intermediate with substrate; via pyruvic acid role is filled by S25. S25 bears the Pyruvic acid (Ser) mark. T57 contributes to the substrate binding site. The active-site Proton donor is Y58. G73–A75 provides a ligand contact to substrate.

Belongs to the PanD family. As to quaternary structure, heterooctamer of four alpha and four beta subunits. The cofactor is pyruvate. Post-translationally, is synthesized initially as an inactive proenzyme, which is activated by self-cleavage at a specific serine bond to produce a beta-subunit with a hydroxyl group at its C-terminus and an alpha-subunit with a pyruvoyl group at its N-terminus.

Its subcellular location is the cytoplasm. It carries out the reaction L-aspartate + H(+) = beta-alanine + CO2. Its pathway is cofactor biosynthesis; (R)-pantothenate biosynthesis; beta-alanine from L-aspartate: step 1/1. Functionally, catalyzes the pyruvoyl-dependent decarboxylation of aspartate to produce beta-alanine. In Burkholderia lata (strain ATCC 17760 / DSM 23089 / LMG 22485 / NCIMB 9086 / R18194 / 383), this protein is Aspartate 1-decarboxylase.